A 188-amino-acid chain; its full sequence is PRA1 family protein 3 (188 aa).

The residue at position 1 (Met1) is an N-acetylmethionine. Topologically, residues Met1–Arg35 are cytoplasmic. The next 2 membrane-spanning stretches (helical) occupy residues Val36 to Ser56 and Val57 to Phe77. Residues Thr78 to Leu93 lie on the Cytoplasmic side of the membrane. 2 helical membrane-spanning segments follow: residues Lys94 to Ser114 and Met115 to Ile135. The required for homodimer formation and heterodimer formation with ARL6IP1 stretch occupies residues Met103–Gly117. The Cytoplasmic segment spans residues His136 to Glu188. The tract at residues His136–Glu188 is targeting to endoplasmic reticulum membrane.

This sequence belongs to the PRA1 family. Homodimer. Heterodimer with ARL6IP1. Forms multimers. Interacts with ARL6. Interacts with prenylated RAB1A and RAB3A. Interacts with SLC1A1/EAAC1. Interacts with RTN2 (via first transmembrane domain). Does not interact with VAMP1, VAMP2 or VAMP3.

The protein resides in the endoplasmic reticulum membrane. It is found in the cell membrane. Its subcellular location is the cytoplasm. It localises to the cytoskeleton. Its function is as follows. Regulates intracellular concentrations of taurine and glutamate. Negatively modulates SLC1A1/EAAC1 glutamate transport activity by decreasing its affinity for glutamate in a PKC activity-dependent manner. Plays a role in the retention of SLC1A1/EAAC1 in the endoplasmic reticulum. This Macaca fascicularis (Crab-eating macaque) protein is PRA1 family protein 3 (ARL6IP5).